Consider the following 682-residue polypeptide: Zinc finger protein 16 (682 aa).

The span at 1 to 10 (MPSLRTRREE) shows a compositional bias: basic and acidic residues. Residues 1–38 (MPSLRTRREEAEMELSAPGPSPWTPAAQARVSDAPAVT) are disordered. The interval 62–210 (YQQPDCDTRT…GVPTAESPLI (149 aa)) is necessary for transcription activation. The segment at 209 to 231 (LICNECGKTFRGNPDLIQRQIVH) adopts a C2H2-type 1; degenerate zinc-finger fold. The segment at 237-259 (FMCDDCGKTFSQNSVLKNRHRSH) adopts a C2H2-type 2; degenerate zinc-finger fold. Lysine 253 is covalently cross-linked (Glycyl lysine isopeptide (Lys-Gly) (interchain with G-Cter in SUMO2)). 8 consecutive C2H2-type zinc fingers follow at residues 265-287 (YQCS…QSHH), 293-315 (YTCT…QKSH), 321-343 (YECN…QRIH), 349-371 (YVCS…HRTH), 377-399 (FECG…QRVH), 405-427 (YECN…HRVH), 433-455 (YKCS…RRIH), and 461-483 (HVCN…QIIH). Required for nuclear localization regions lie at residues 268 to 393 (SECG…AHLR) and 341 to 373 (RIHS…THTG). Residues 473–503 (SSVLRKHQIIHTGEKPYRCSVCGKAFSHSSA) are required for nuclear localization. An N6-acetyllysine modification is found at lysine 487. 7 C2H2-type zinc fingers span residues 489–511 (YRCS…QGVH), 517–539 (YACH…QRVH), 545–567 (YECT…QRIH), 573–595 (HECN…QKVH), 601–623 (YTCV…QIIH), 629–651 (YKCS…QRIH), and 657–679 (YDCA…QLIH).

The protein belongs to the krueppel C2H2-type zinc-finger protein family. Interacts with INCA1; the interaction inhibits INCA1 activity and induces the cell cycle process.

The protein resides in the nucleus. In terms of biological role, acts as a transcriptional activator. Promotes cell proliferation by facilitating the cell cycle phase transition from the S to G2/M phase. Involved in both the hemin- and phorbol myristate acetate (PMA)-induced erythroid and megakaryocytic differentiation, respectively. Also plays a role as an inhibitor of cell apoptosis. The protein is Zinc finger protein 16 (ZNF16) of Pan troglodytes (Chimpanzee).